Consider the following 545-residue polypeptide: Glucose-6-phosphate isomerase (545 aa).

The active-site Proton donor is glutamate 351. Catalysis depends on residues histidine 382 and lysine 510.

This sequence belongs to the GPI family.

Its subcellular location is the cytoplasm. It carries out the reaction alpha-D-glucose 6-phosphate = beta-D-fructose 6-phosphate. The protein operates within carbohydrate biosynthesis; gluconeogenesis. Its pathway is carbohydrate degradation; glycolysis; D-glyceraldehyde 3-phosphate and glycerone phosphate from D-glucose: step 2/4. In terms of biological role, catalyzes the reversible isomerization of glucose-6-phosphate to fructose-6-phosphate. The chain is Glucose-6-phosphate isomerase from Shewanella pealeana (strain ATCC 700345 / ANG-SQ1).